A 916-amino-acid polypeptide reads, in one-letter code: Pertactin autotransporter (916 aa).

A signal peptide spans 1 to 37 (MNMSLSRIVKAAPLRRTTLAMALGALGALGAAPAAHA). The Cell attachment site; involved in adhesion to various eukaryotic cell lines motif lies at 263–265 (RGD). 3 tandem repeats follow at residues 269 to 273 (GGAVP), 274 to 278 (GGAVP), and 279 to 283 (GGAVP). The 4 X 5 AA tandem repeats of G-G-A-V-P stretch occupies residues 269–288 (GGAVPGGAVPGGAVPGGFGP). Residues 284 to 288 (GGFGP) form a 4; approximate repeat. A disordered region spans residues 564-613 (SLVGAKAPPAPKPAPQPGPQPGPQPPQPPQPPQRQPEAPAPQPPAGRELS). Over residues 571–607 (PPAPKPAPQPGPQPGPQPPQPPQPPQRQPEAPAPQPP) the composition is skewed to pro residues. The 6 X 3 AA repeats of P-Q-P stretch occupies residues 578–606 (PQPGPQPGPQPPQPPQPPQRQPEAPAPQP). In terms of domain architecture, Autotransporter spans 648–916 (LNPDAGGAWG…TFHAGYRYSW (269 aa)). The short motif at 706–708 (RGD) is the Cell attachment site element.

As to quaternary structure, monomer.

Its subcellular location is the periplasm. It is found in the secreted. It localises to the cell surface. The protein resides in the cell outer membrane. Agglutinogen that binds to eukaryotic cells; a process mediated by the R-G-D sequence. Pertactin may have a role in bacterial adhesion, and thus play a role in virulence. May contribute to the disease state of whooping cough. In Bordetella bronchiseptica (strain ATCC BAA-588 / NCTC 13252 / RB50) (Alcaligenes bronchisepticus), this protein is Pertactin autotransporter (prn).